The sequence spans 230 residues: uncharacterized protein (230 aa).

Positions 1–57 (MPGPHSPNPGVGTNGPAPYPEPSSHEPQALDYPHDLGAAEPAFAPGPADDAALPPAA) are disordered. The span at 38–55 (AAEPAFAPGPADDAALPP) shows a compositional bias: low complexity. The chain crosses the membrane as a helical span at residues 75-95 (LLIGIVVALALVSAMTAAIIY).

It is found in the membrane. This is an uncharacterized protein from Mycobacterium tuberculosis (strain CDC 1551 / Oshkosh).